The primary structure comprises 194 residues: Calcium-binding protein J (194 aa).

2 consecutive EF-hand domains span residues 62–97 (WDKDLLIQLFKLFDTDCNGILDFKEFVTSLYIMTKA) and 98–133 (PVVEKLSLLFDLFDKDQSGHLEVDEVEKLIGVAVAC). Ca(2+) is bound by residues Asp75, Asp77, Asn79, Glu86, Asp111, Asp113, Ser115, His117, and Glu122.

The protein belongs to the recoverin family.

This Dictyostelium discoideum (Social amoeba) protein is Calcium-binding protein J (cbpJ).